A 420-amino-acid polypeptide reads, in one-letter code: Gamma-glutamyl phosphate reductase (420 aa).

The protein belongs to the gamma-glutamyl phosphate reductase family.

The protein resides in the cytoplasm. It carries out the reaction L-glutamate 5-semialdehyde + phosphate + NADP(+) = L-glutamyl 5-phosphate + NADPH + H(+). The protein operates within amino-acid biosynthesis; L-proline biosynthesis; L-glutamate 5-semialdehyde from L-glutamate: step 2/2. Catalyzes the NADPH-dependent reduction of L-glutamate 5-phosphate into L-glutamate 5-semialdehyde and phosphate. The product spontaneously undergoes cyclization to form 1-pyrroline-5-carboxylate. The chain is Gamma-glutamyl phosphate reductase from Streptococcus pneumoniae serotype 2 (strain D39 / NCTC 7466).